The primary structure comprises 279 residues: Dermonecrotic toxin LbSicTox-alphaIB1a (279 aa).

H11 is a catalytic residue. The Mg(2+) site is built by E31 and D33. H47 acts as the Nucleophile in catalysis. 2 disulfide bridges follow: C51–C57 and C53–C196. Mg(2+) is bound at residue D91.

It belongs to the arthropod phospholipase D family. Class II subfamily. Class IIa sub-subfamily. The cofactor is Mg(2+). As to expression, expressed by the venom gland.

Its subcellular location is the secreted. The catalysed reaction is an N-(acyl)-sphingosylphosphocholine = an N-(acyl)-sphingosyl-1,3-cyclic phosphate + choline. It catalyses the reaction an N-(acyl)-sphingosylphosphoethanolamine = an N-(acyl)-sphingosyl-1,3-cyclic phosphate + ethanolamine. It carries out the reaction a 1-acyl-sn-glycero-3-phosphocholine = a 1-acyl-sn-glycero-2,3-cyclic phosphate + choline. The enzyme catalyses a 1-acyl-sn-glycero-3-phosphoethanolamine = a 1-acyl-sn-glycero-2,3-cyclic phosphate + ethanolamine. In terms of biological role, dermonecrotic toxins cleave the phosphodiester linkage between the phosphate and headgroup of certain phospholipids (sphingolipid and lysolipid substrates), forming an alcohol (often choline) and a cyclic phosphate. This toxin acts on sphingomyelin (SM) with high activity (about 30.5-31.5 U/mg). It may also act on ceramide phosphoethanolamine (CPE), lysophosphatidylcholine (LPC) and lysophosphatidylethanolamine (LPE), but not on lysophosphatidylserine (LPS), and lysophosphatidylglycerol (LPG). It acts by transphosphatidylation, releasing exclusively cyclic phosphate products as second products. Induces dermonecrosis, hemolysis, increased vascular permeability, edema, inflammatory response, and platelet aggregation. Is lethal to mice. This is Dermonecrotic toxin LbSicTox-alphaIB1a from Loxosceles boneti (North American fiddleback spider).